The chain runs to 968 residues: RNA polymerase-associated protein RapA (968 aa).

Positions 163-332 constitute a Helicase ATP-binding domain; sequence EVGRRYAPRV…FARLRLLDPD (170 aa). 176 to 183 is an ATP binding site; sequence DEVGLGKT. The short motif at 278–281 is the DEAH box element; the sequence is DEAH. One can recognise a Helicase C-terminal domain in the interval 491–655; the sequence is RVDWLIEFLK…EFAEDLLNVL (165 aa).

Belongs to the SNF2/RAD54 helicase family. RapA subfamily. In terms of assembly, interacts with the RNAP. Has a higher affinity for the core RNAP than for the holoenzyme. Its ATPase activity is stimulated by binding to RNAP.

Functionally, transcription regulator that activates transcription by stimulating RNA polymerase (RNAP) recycling in case of stress conditions such as supercoiled DNA or high salt concentrations. Probably acts by releasing the RNAP, when it is trapped or immobilized on tightly supercoiled DNA. Does not activate transcription on linear DNA. Probably not involved in DNA repair. In Shewanella baltica (strain OS223), this protein is RNA polymerase-associated protein RapA.